Here is a 103-residue protein sequence, read N- to C-terminus: Putative membrane protein insertion efficiency factor (103 aa).

This sequence belongs to the UPF0161 family.

It localises to the cell inner membrane. Could be involved in insertion of integral membrane proteins into the membrane. This is Putative membrane protein insertion efficiency factor from Chlamydia caviae (strain ATCC VR-813 / DSM 19441 / 03DC25 / GPIC) (Chlamydophila caviae).